The chain runs to 440 residues: 3-phosphoshikimate 1-carboxyvinyltransferase (440 aa).

3-phosphoshikimate-binding residues include Lys25, Ser26, and Arg30. Lys25 lines the phosphoenolpyruvate pocket. Positions 96 and 124 each coordinate phosphoenolpyruvate. 3-phosphoshikimate is bound by residues Ser168, Gln169, Asp310, and Lys337. Gln169 serves as a coordination point for phosphoenolpyruvate. The active-site Proton acceptor is Asp310. Residues Arg341, Arg382, and Lys409 each coordinate phosphoenolpyruvate.

It belongs to the EPSP synthase family. Monomer.

Its subcellular location is the cytoplasm. It carries out the reaction 3-phosphoshikimate + phosphoenolpyruvate = 5-O-(1-carboxyvinyl)-3-phosphoshikimate + phosphate. It functions in the pathway metabolic intermediate biosynthesis; chorismate biosynthesis; chorismate from D-erythrose 4-phosphate and phosphoenolpyruvate: step 6/7. Catalyzes the transfer of the enolpyruvyl moiety of phosphoenolpyruvate (PEP) to the 5-hydroxyl of shikimate-3-phosphate (S3P) to produce enolpyruvyl shikimate-3-phosphate and inorganic phosphate. The chain is 3-phosphoshikimate 1-carboxyvinyltransferase from Chlamydia trachomatis serovar L2 (strain ATCC VR-902B / DSM 19102 / 434/Bu).